A 931-amino-acid chain; its full sequence is Mitochondrial cox1 translation regulator ppr4 (931 aa).

A mitochondrion-targeting transit peptide spans 1-16 (MSKSFAYRHIWCFWRF). PPR repeat units lie at residues 247-277 (NEVL…MYRT), 282-316 (SFTA…RPKI), 429-461 (HLLN…KIKV), 462-496 (DERT…GIKT), 497-531 (SNQA…GITE), 598-632 (NVVH…GKAP), and 683-713 (PPSL…YLEY).

Component of the MRH5C complex, composed of mrh5, ppr4, mtf2, and sls1. Proteins mtf2 and sls1 form a subcomplex that serves as a scaffold to bring mrh5 and ppr4 together. The MRH5C complex associates with the small subunit of the mitochondrial ribosome.

The protein localises to the mitochondrion. Its function is as follows. RNA-binding translation activation factor that as part of the MRH5C complex specifically recruits cox1 mRNA to the mitochondrial ribosome for translation initiation. The chain is Mitochondrial cox1 translation regulator ppr4 from Schizosaccharomyces pombe (strain 972 / ATCC 24843) (Fission yeast).